The following is a 337-amino-acid chain: Sorting nexin-15 (337 aa).

The 130-residue stretch at Met-1 to Arg-130 folds into the PX domain. Arg-51, Ser-53, Arg-87, and Arg-96 together coordinate a 1,2-diacyl-sn-glycero-3-phospho-(1D-myo-inositol-3-phosphate). Position 105 is an omega-N-methylarginine (Arg-105). The segment at Glu-133 to Leu-156 is disordered. Pro residues predominate over residues Leu-141–Pro-151. Residues Ser-201 and Ser-227 each carry the phosphoserine modification. The disordered stretch occupies residues Leu-244–Gly-270. Acidic residues predominate over residues Gly-253–Glu-263. One can recognise an MIT domain in the interval Ala-265 to Pro-337.

This sequence belongs to the sorting nexin family. Homodimer. Interacts with SNX1, SNX2 and SNX4.

It localises to the cytoplasm. The protein localises to the membrane. Its subcellular location is the cytoplasmic vesicle membrane. Its function is as follows. May be involved in several stages of intracellular trafficking. Overexpression of SNX15 disrupts the normal trafficking of proteins from the plasma membrane to recycling endosomes or the TGN. The polypeptide is Sorting nexin-15 (Snx15) (Mus musculus (Mouse)).